The sequence spans 311 residues: Meteorin-like protein (311 aa).

Low complexity predominate over residues 1-13; the sequence is MRGAARAAWGRAG. Residues 1–24 form a disordered region; the sequence is MRGAARAAWGRAGQPWPRPPAPGP. The first 45 residues, 1-45, serve as a signal peptide directing secretion; it reads MRGAARAAWGRAGQPWPRPPAPGPPPPPLPLLLLLLAGLLGGAGA. Cystine bridges form between Cys-52/Cys-75, Cys-107/Cys-143, Cys-188/Cys-260, Cys-191/Cys-284, and Cys-201/Cys-306.

This sequence belongs to the meteorin family. As to expression, highly expressed in the skeletal muscle, in subcutaneous adipose tissue, epididymal white adipose tissue depots and heart. Also expressed in brown adipose tissues and kidney.

It localises to the secreted. Its function is as follows. Hormone induced following exercise or cold exposure that promotes energy expenditure. Induced either in the skeletal muscle after exercise or in adipose tissue following cold exposure and is present in the circulation. Able to stimulate energy expenditure associated with the browning of the white fat depots and improves glucose tolerance. Does not promote an increase in a thermogenic gene program via direct action on adipocytes, but acts by stimulating several immune cell subtypes to enter the adipose tissue and activate their prothermogenic actions. Stimulates an eosinophil-dependent increase in IL4 expression and promotes alternative activation of adipose tissue macrophages, which are required for the increased expression of the thermogenic and anti-inflammatory gene programs in fat. Required for some cold-induced thermogenic responses, suggesting a role in metabolic adaptations to cold temperatures. In Homo sapiens (Human), this protein is Meteorin-like protein (METRNL).